Consider the following 212-residue polypeptide: ATP phosphoribosyltransferase (212 aa).

Belongs to the ATP phosphoribosyltransferase family. Short subfamily. Heteromultimer composed of HisG and HisZ subunits.

The protein resides in the cytoplasm. The catalysed reaction is 1-(5-phospho-beta-D-ribosyl)-ATP + diphosphate = 5-phospho-alpha-D-ribose 1-diphosphate + ATP. It participates in amino-acid biosynthesis; L-histidine biosynthesis; L-histidine from 5-phospho-alpha-D-ribose 1-diphosphate: step 1/9. Its function is as follows. Catalyzes the condensation of ATP and 5-phosphoribose 1-diphosphate to form N'-(5'-phosphoribosyl)-ATP (PR-ATP). Has a crucial role in the pathway because the rate of histidine biosynthesis seems to be controlled primarily by regulation of HisG enzymatic activity. The sequence is that of ATP phosphoribosyltransferase from Prochlorococcus marinus (strain MIT 9301).